Reading from the N-terminus, the 139-residue chain is Endoribonuclease YbeY (139 aa).

Zn(2+) contacts are provided by His107, His111, and Asp117.

The protein belongs to the endoribonuclease YbeY family. Zn(2+) serves as cofactor.

The protein localises to the cytoplasm. Single strand-specific metallo-endoribonuclease involved in late-stage 70S ribosome quality control and in maturation of the 3' terminus of the 16S rRNA. In Bacteroides fragilis (strain ATCC 25285 / DSM 2151 / CCUG 4856 / JCM 11019 / LMG 10263 / NCTC 9343 / Onslow / VPI 2553 / EN-2), this protein is Endoribonuclease YbeY.